We begin with the raw amino-acid sequence, 653 residues long: Sodium-dependent phosphate transporter 2 (653 aa).

The Extracellular segment spans residues 1–5 (MAIDG). Residues 6–26 (YLWMVILGFIIAFILAFSVGA) traverse the membrane as a helical segment. The Cytoplasmic portion of the chain corresponds to 27–46 (NDVANSFGTAVGSGVVTLRQ). The helical transmembrane segment at 47 to 67 (ACILASIFETTGSVLLGAKVG) threads the bilayer. Topologically, residues 68-86 (ETIRKGIIDVNLYNETVET) are extracellular. A glycan (N-linked (GlcNAc...) asparagine) is linked at Asn-81. Residues 87-107 (LMAGEVSAMVGSAVWQLIASF) form a helical membrane-spanning segment. Topologically, residues 108–109 (LR) are cytoplasmic. Residues 110–130 (LPISGTHCIVGSTIGFSLVAI) traverse the membrane as a helical segment. Residues 131 to 142 (GTQGVQWMELVK) lie on the Extracellular side of the membrane. A helical transmembrane segment spans residues 143–163 (IVASWFISPLLSGFMSGVLFI). The Cytoplasmic portion of the chain corresponds to 164–190 (LIRIFILKKEDPVPNGLRALPVFYAAT). A helical transmembrane segment spans residues 191–211 (IAINVFSIMYTGAPVLGLVLP). The Extracellular segment spans residues 212-213 (IW). A helical membrane pass occupies residues 214–234 (AIALISFGVALLFALFVWLFV). Topologically, residues 235 to 483 (CPWMRRKIAG…EEKEEKDTAE (249 aa)) are cytoplasmic. Ser-253, Ser-256, Ser-259, and Ser-268 each carry phosphoserine. The interval 275–311 (PGAKANDDSTVPLTGSAGEPSGTSEGTSVGNHPRASY) is disordered. Residues 295-304 (SGTSEGTSVG) show a composition bias toward polar residues. Phosphoserine is present on residues Ser-316 and Ser-385. Residues 459–478 (SELTDPDQPRDDPAEEEKEE) are disordered. Residues 484–504 (VHLLFHFLQVLTACFGSFAHG) form a helical membrane-spanning segment. Topologically, residues 505–531 (GNDVSNAIGPLVALWLIYEQGAVLQEA) are extracellular. A helical membrane pass occupies residues 532–552 (VTPVWLLFYGGVGICTGLWVW). The Cytoplasmic segment spans residues 553-572 (GRRVIQTMGKDLTPITPSSG). A helical transmembrane segment spans residues 573–587 (FTIELASAFTVVIAS). The Extracellular segment spans residues 588-594 (NVGLPVS). The helical transmembrane segment at 595–610 (TTHCKVGSVVAVGWIR) threads the bilayer. The Cytoplasmic portion of the chain corresponds to 611 to 622 (SRKAVDWRLFRN). The chain crosses the membrane as a helical span at residues 623–643 (IFVAWFVTVPVAGLFSAAIMA). The Extracellular portion of the chain corresponds to 644–653 (LLMYGILPYV).

Belongs to the inorganic phosphate transporter (PiT) (TC 2.A.20) family. Homodimer.

It localises to the cell membrane. The protein localises to the apical cell membrane. The catalysed reaction is 2 Na(+)(out) + phosphate(out) = 2 Na(+)(in) + phosphate(in). Sodium-phosphate symporter which preferentially transports the monovalent form of phosphate with a stoichiometry of two sodium ions per phosphate ion. Plays a critical role in the determination of bone quality and strength by providing phosphate for bone mineralization. Required to maintain normal cerebrospinal fluid phosphate levels. Mediates phosphate-induced calcification of vascular smooth muscle cells (VCMCs) and can functionally compensate for loss of SLC20A1 in VCMCs. In terms of biological role, (Microbial infection) Functions as a retroviral receptor for feline leukemia virus subgroup B (FeLV-B). This chain is Sodium-dependent phosphate transporter 2 (SLC20A2), found in Felis catus (Cat).